The primary structure comprises 458 residues: Argininosuccinate lyase (458 aa).

Belongs to the lyase 1 family. Argininosuccinate lyase subfamily.

The protein localises to the cytoplasm. The catalysed reaction is 2-(N(omega)-L-arginino)succinate = fumarate + L-arginine. It functions in the pathway amino-acid biosynthesis; L-arginine biosynthesis; L-arginine from L-ornithine and carbamoyl phosphate: step 3/3. This Trichlorobacter lovleyi (strain ATCC BAA-1151 / DSM 17278 / SZ) (Geobacter lovleyi) protein is Argininosuccinate lyase.